The primary structure comprises 359 residues: Probable ribonucleotide transport ATP-binding protein mkl (359 aa).

Residues 28-264 (IEVNGLTKSF…DEPVVRQFLN (237 aa)) enclose the ABC transporter domain. 60–67 (GPSGTGKS) contacts ATP.

It belongs to the ABC transporter superfamily.

Not known, could be involved in the transport of ribonucleotides. The sequence is that of Probable ribonucleotide transport ATP-binding protein mkl (mkl) from Mycobacterium bovis (strain ATCC BAA-935 / AF2122/97).